A 173-amino-acid chain; its full sequence is Alpha-crystallin A chain (173 aa).

N-acetylmethionine is present on methionine 1. The required for complex formation with BFSP1 and BFSP2 stretch occupies residues 1 to 63; the sequence is MDVTIQHPWF…RTVLDSGISE (63 aa). Position 6 is a deamidated glutamine; partial (glutamine 6). A Phosphoserine modification is found at serine 45. At glutamine 50 the chain carries Deamidated glutamine; partial. In terms of domain architecture, sHSP spans 52-162; the sequence is LFRTVLDSGI…GHSERAIPVS (111 aa). At lysine 99 the chain carries N6-acetyllysine. A Zn(2+)-binding site is contributed by histidine 100. Residue asparagine 101 is modified to Deamidated asparagine; partial. Glutamate 102 and histidine 107 together coordinate Zn(2+). A Phosphoserine modification is found at serine 122. Residue asparagine 123 is modified to Deamidated asparagine; partial. The cysteines at positions 131 and 142 are disulfide-linked. The segment at 146-173 is disordered; the sequence is VQSSMDDGHSERAIPVSREEKPSSVPSS. A Deamidated glutamine; partial modification is found at glutamine 147. The span at 151 to 167 shows a compositional bias: basic and acidic residues; sequence DDGHSERAIPVSREEKP. Histidine 154 serves as a coordination point for Zn(2+). Serine 162 carries O-linked (GlcNAc) serine glycosylation.

Belongs to the small heat shock protein (HSP20) family. As to quaternary structure, heteromer composed of three CRYAA and one CRYAB subunits. Inter-subunit bridging via zinc ions enhances stability, which is crucial as there is no protein turn over in the lens. Can also form homodimers and homotetramers (dimers of dimers) which serve as the building blocks of homooligomers. Within homooligomers, the zinc-binding motif is created from residues of 3 different molecules. His-100 and Glu-102 from one molecule are ligands of the zinc ion, and His-107 and His-154 residues from additional molecules complete the site with tetrahedral coordination geometry. Part of a complex required for lens intermediate filament formation composed of BFSP1, BFSP2 and CRYAA. Post-translationally, undergoes age-dependent proteolytical cleavage at the C-terminus.

Its subcellular location is the cytoplasm. The protein resides in the nucleus. Contributes to the transparency and refractive index of the lens. In its oxidized form (absence of intramolecular disulfide bond), acts as a chaperone, preventing aggregation of various proteins under a wide range of stress conditions. Required for the correct formation of lens intermediate filaments as part of a complex composed of BFSP1, BFSP2 and CRYAA. The protein is Alpha-crystallin A chain (CRYAA) of Orycteropus afer (Aardvark).